A 528-amino-acid polypeptide reads, in one-letter code: Peptide chain release factor 3 (528 aa).

A tr-type G domain is found at 10 to 279; that stretch reads AKRRTFAIIS…GLVEWAPAPM (270 aa). GTP-binding positions include 19–26, 87–91, and 141–144; these read SHPDAGKT, DTPGH, and NKLD.

Belongs to the TRAFAC class translation factor GTPase superfamily. Classic translation factor GTPase family. PrfC subfamily.

Its subcellular location is the cytoplasm. In terms of biological role, increases the formation of ribosomal termination complexes and stimulates activities of RF-1 and RF-2. It binds guanine nucleotides and has strong preference for UGA stop codons. It may interact directly with the ribosome. The stimulation of RF-1 and RF-2 is significantly reduced by GTP and GDP, but not by GMP. This Escherichia coli O1:K1 / APEC protein is Peptide chain release factor 3.